Consider the following 127-residue polypeptide: uncharacterized protein (127 aa).

This is an uncharacterized protein from Escherichia coli (strain K12).